We begin with the raw amino-acid sequence, 826 residues long: Leucine--tRNA ligase (826 aa).

Residues 42–52 (PYPSGNLHMGH) carry the 'HIGH' region motif. The 'KMSKS' region motif lies at 581–585 (KMSKS). Lys-584 is an ATP binding site.

The protein belongs to the class-I aminoacyl-tRNA synthetase family.

Its subcellular location is the cytoplasm. The catalysed reaction is tRNA(Leu) + L-leucine + ATP = L-leucyl-tRNA(Leu) + AMP + diphosphate. This chain is Leucine--tRNA ligase, found in Desulforudis audaxviator (strain MP104C).